Consider the following 92-residue polypeptide: Defensin (92 aa).

Positions 1 to 20 (MKFFVLVAIAFALLACVAQA) are cleaved as a signal peptide. Positions 21 to 52 (QPVSDVDPIPEDHVLVHEDAHQEVLQHSRQKR) are excised as a propeptide. Intrachain disulfides connect Cys-55–Cys-82, Cys-68–Cys-88, and Cys-72–Cys-90.

The protein belongs to the invertebrate defensin family. Type 1 subfamily. As to expression, hemolymph (at protein level).

The protein localises to the secreted. In terms of biological role, responsible for the anti Gram-positive activity of immune hemolymph. Expressed in the absence of immune challenge during metamorphosis. The polypeptide is Defensin (Def) (Drosophila melanogaster (Fruit fly)).